The sequence spans 144 residues: 3-hydroxyacyl-[acyl-carrier-protein] dehydratase FabZ (144 aa).

H48 is a catalytic residue.

Belongs to the thioester dehydratase family. FabZ subfamily.

It localises to the cytoplasm. It catalyses the reaction a (3R)-hydroxyacyl-[ACP] = a (2E)-enoyl-[ACP] + H2O. Involved in unsaturated fatty acids biosynthesis. Catalyzes the dehydration of short chain beta-hydroxyacyl-ACPs and long chain saturated and unsaturated beta-hydroxyacyl-ACPs. The protein is 3-hydroxyacyl-[acyl-carrier-protein] dehydratase FabZ of Bacillus licheniformis (strain ATCC 14580 / DSM 13 / JCM 2505 / CCUG 7422 / NBRC 12200 / NCIMB 9375 / NCTC 10341 / NRRL NRS-1264 / Gibson 46).